We begin with the raw amino-acid sequence, 239 residues long: uncharacterized protein (239 aa).

The signal sequence occupies residues 1 to 19 (MPLLHRTIIFLQLLGTISS). N-linked (GlcNAc...) asparagine glycosylation is found at Asn-44, Asn-58, Asn-72, Asn-92, Asn-109, Asn-136, Asn-172, Asn-192, and Asn-213.

It localises to the secreted. This is an uncharacterized protein from Caenorhabditis elegans.